Here is a 169-residue protein sequence, read N- to C-terminus: S-ribosylhomocysteine lyase (169 aa).

Positions 54, 58, and 128 each coordinate Fe cation.

This sequence belongs to the LuxS family. As to quaternary structure, homodimer. Fe cation serves as cofactor.

The catalysed reaction is S-(5-deoxy-D-ribos-5-yl)-L-homocysteine = (S)-4,5-dihydroxypentane-2,3-dione + L-homocysteine. In terms of biological role, involved in the synthesis of autoinducer 2 (AI-2) which is secreted by bacteria and is used to communicate both the cell density and the metabolic potential of the environment. The regulation of gene expression in response to changes in cell density is called quorum sensing. Catalyzes the transformation of S-ribosylhomocysteine (RHC) to homocysteine (HC) and 4,5-dihydroxy-2,3-pentadione (DPD). The polypeptide is S-ribosylhomocysteine lyase (Sulfurovum sp. (strain NBC37-1)).